We begin with the raw amino-acid sequence, 111 residues long: Antitoxin PrlF (111 aa).

The region spanning T12–D59 is the SpoVT-AbrB domain.

In terms of assembly, homodimer; forms a complex with YhaV with stoichiometry PrlF(2)-YhaV(4), possibly as a YhaV(2)-PrlF(2)-YhaV(2) complex like the MazFE complex.

Its subcellular location is the cytoplasm. In terms of biological role, antitoxin component of a type II toxin-antitoxin (TA) system. Labile antitoxin that binds to the YhaV toxin and neutralizes its ribonuclease activity. Also acts as a transcription factor. The YhaV/PrlF complex binds the prlF-yhaV operon, probably negatively regulating its expression. This chain is Antitoxin PrlF (prlF), found in Escherichia coli O6:H1 (strain CFT073 / ATCC 700928 / UPEC).